A 641-amino-acid chain; its full sequence is MGVKNLWDILESCKKKLPLHHLQNKKVCVDLSCWLVQMYSANRSPAFAKDKVYLKNLFHRIRALLALNCTLLFVTDGAIPSLKLATYRRRLGSISHAAKESDQPNSHPSISLRRNKGSEFSCMIKEAKRLGMALGIPCLDGLEEAEAQCASLDLESLCDGCFTSDSDAFLFGARTVYRDVFIGEGGYVICYEMEDIEKTLGFGRNSLISLAVLLGSDYSNGVNGFGPETACRLVKSVGDNLILDQILSNGVKATRKCKGKNSGNKVDDMCPKASSCEVGMTQDSDGQFRDVINAYLEPKCHSPDSEAVQRVCGQHPFLRPQLQKICEEYFDWSPEKTDQYILPKIAERELRRFSDLRSASSALGIKPLLSEIPVPCPVLAIVKQRKVHGNECYEVSWRNIEGLQVSVVPGDLVKSACPEKITEFLEKKGEEKKQKRRARPKKSGQAAVKDVDEQLQELLLGIEADSGGILGATASVCQTLTAAYTVAVEDVVDLSSPSPPLRKLSKSQKKMMAEDVNVAGMNMNKMESESSFSTQSSTSDVDNQLIDLSSPLAGGDNGMKGGRRALADISNVGSHSTETDGGGGGGGGVASVGHGTTIDLSSPSPAIGDRSRVHHDDDDVIHERKARDLRMFLDSIRNELY.

The tract at residues 1–90 is N-domain; it reads MGVKNLWDIL…SLKLATYRRR (90 aa). Residues 2 to 97 are XPG-N domain; the sequence is GVKNLWDILE…RRRLGSISHA (96 aa). Residues D30, D76, E144, E146, D165, D167, and D217 each coordinate Mg(2+). The interval 132–217 is XPG-I domain; the sequence is MALGIPCLDG…ISLAVLLGSD (86 aa). 2 I-domain regions span residues 132–220 and 132–221; these read MALG…DYSN and MALG…YSNG. The interval 217–350 is 5'-3' exonuclease domain; sequence DYSNGVNGFG…ILPKIAEREL (134 aa). Disordered regions lie at residues 428-448 and 572-615; these read KGEE…QAAV and VGSH…RVHH. A compositionally biased stretch (gly residues) spans 580 to 590; it reads DGGGGGGGGVA.

The protein belongs to the XPG/RAD2 endonuclease family. GEN subfamily. Mg(2+) is required as a cofactor. Highly expressed in shoot apical meristem (SAM) and young leaves. Expressed in roots, flag leaf and panicles.

Its subcellular location is the nucleus. Its function is as follows. Single-stranded DNA endonuclease activity in vitro. May not be active as double-stranded DNA endonuclease. Endonuclease which cleaves flap structures at the junction between single-stranded DNA and double-stranded DNA with a specific cleavage site in the 5' overhang strand exactly one nucleotide 3' of the branch point. Structure- and sequence-specific nuclease that resolves holliday junctions (HJs) by symmetrically oriented incisions in two opposing strands near the junction point, thus leading to ligatable products; HJs are physical links between homologous DNA molecules that arise as central intermediary structures during homologous recombination and repair in meiotic and somatic cells. Probably involved in the resolution of toxic replication structures to ensure genome stability, and to maintain telomere integrity and replication. The chain is Single-strand DNA endonuclease 1 from Oryza sativa subsp. japonica (Rice).